The following is a 523-amino-acid chain: GMP synthase [glutamine-hydrolyzing] (523 aa).

The region spanning 8-205 is the Glutamine amidotransferase type-1 domain; it reads KILILDFGSQ…VVNICGCETK (198 aa). The active-site Nucleophile is the Cys85. Active-site residues include His179 and Glu181. Residues 206–398 form the GMPS ATP-PPase domain; the sequence is WTAENIIEDA…LGLPAEMINR (193 aa). 233–239 contributes to the ATP binding site; it reads SGGVDSS.

As to quaternary structure, homodimer.

The catalysed reaction is XMP + L-glutamine + ATP + H2O = GMP + L-glutamate + AMP + diphosphate + 2 H(+). The protein operates within purine metabolism; GMP biosynthesis; GMP from XMP (L-Gln route): step 1/1. Functionally, catalyzes the synthesis of GMP from XMP. The sequence is that of GMP synthase [glutamine-hydrolyzing] from Haemophilus influenzae (strain PittGG).